A 271-amino-acid chain; its full sequence is Aminodeoxychorismate lyase (271 aa).

Position 140 is an N6-(pyridoxal phosphate)lysine (K140).

The protein belongs to the class-IV pyridoxal-phosphate-dependent aminotransferase family. As to quaternary structure, homodimer. Pyridoxal 5'-phosphate is required as a cofactor.

It carries out the reaction 4-amino-4-deoxychorismate = 4-aminobenzoate + pyruvate + H(+). Its pathway is cofactor biosynthesis; tetrahydrofolate biosynthesis; 4-aminobenzoate from chorismate: step 2/2. Its function is as follows. Involved in the biosynthesis of p-aminobenzoate (PABA), a precursor of tetrahydrofolate. Converts 4-amino-4-deoxychorismate into 4-aminobenzoate (PABA) and pyruvate. The polypeptide is Aminodeoxychorismate lyase (pabC) (Vibrio harveyi (Beneckea harveyi)).